Consider the following 863-residue polypeptide: MDCVKLVFLMLYTFLCQLALSSSLPHLCPEDQALSLLQFKNMFTINPNASDYCYDIRTYVDIQSYPRTLSWNKSTSCCSWDGVHCDETTGQVIALDLRCSQLQGKFHSNSSLFQLSNLKRLDLSFNNFTGSLISPKFGEFSNLTHLDLSHSSFTGLIPSEICHLSKLHVLRICDQYGLSLVPYNFELLLKNLTQLRELNLESVNISSTIPSNFSSHLTTLQLSGTELHGILPERVFHLSNLQSLHLSVNPQLTVRFPTTKWNSSASLMTLYVDSVNIADRIPKSFSHLTSLHELYMGRCNLSGPIPKPLWNLTNIVFLHLGDNHLEGPISHFTIFEKLKRLSLVNNNFDGGLEFLSFNTQLERLDLSSNSLTGPIPSNISGLQNLECLYLSSNHLNGSIPSWIFSLPSLVELDLSNNTFSGKIQEFKSKTLSAVTLKQNKLKGRIPNSLLNQKNLQLLLLSHNNISGHISSAICNLKTLILLDLGSNNLEGTIPQCVVERNEYLSHLDLSKNRLSGTINTTFSVGNILRVISLHGNKLTGKVPRSMINCKYLTLLDLGNNMLNDTFPNWLGYLFQLKILSLRSNKLHGPIKSSGNTNLFMGLQILDLSSNGFSGNLPERILGNLQTMKEIDESTGFPEYISDPYDIYYNYLTTISTKGQDYDSVRILDSNMIINLSKNRFEGHIPSIIGDLVGLRTLNLSHNVLEGHIPASFQNLSVLESLDLSSNKISGEIPQQLASLTFLEVLNLSHNHLVGCIPKGKQFDSFGNTSYQGNDGLRGFPLSKLCGGEDQVTTPAELDQEEEEEDSPMISWQGVLVGYGCGLVIGLSVIYIMWSTQYPAWFSRMDLKLEHIITTKMKKHKKRY.

Residues 1 to 21 (MDCVKLVFLMLYTFLCQLALS) form the signal peptide. At 22 to 812 (SSLPHLCPED…EEDSPMISWQ (791 aa)) the chain is on the extracellular side. Positions 24–91 (LPHLCPEDQA…GVHCDETTGQ (68 aa)) are N-cap. N-linked (GlcNAc...) asparagine glycans are attached at residues Asn-48, Asn-72, Asn-109, Asn-127, Asn-142, Asn-191, Asn-204, and Asn-212. One copy of the LRR 1; degenerate repeat lies at 92 to 115 (VIALDLRCSQLQGKFHSNSSLFQL). 2 LRR repeats span residues 116–139 (SNLK…KFGE) and 141–164 (SNLT…ICHL). Residues 165–191 (SKLHVLRICDQYGLSLVPYNFELLLKN) form an LRR 4; degenerate repeat. LRR repeat units lie at residues 192 to 214 (LTQL…SNFS), 215 to 238 (SHLT…VFHL), 241 to 263 (LQSL…KWNS), 265 to 287 (ASLM…SFSH), 288 to 312 (LTSL…LWNL), 314 to 335 (NIVF…FTIF), 336 to 358 (EKLK…LSFN), 359 to 382 (TQLE…ISGL), 383 to 406 (QNLE…IFSL), 408 to 428 (SLVE…EFKS), 429 to 452 (KTLS…LLNQ), 454 to 476 (NLQL…ICNL), 477 to 500 (KTLI…VVER), 502 to 524 (EYLS…TFSV), 525 to 549 (GNIL…MINC), 551 to 572 (YLTL…WLGY), 573 to 597 (LFQL…GNTN), 599 to 623 (FMGL…ILGN), 667 to 690 (LDSN…IIGD), 691 to 714 (LVGL…SFQN), 715 to 739 (LSVL…LASL), and 741 to 759 (FLEV…IPKG). Asn-262 carries N-linked (GlcNAc...) asparagine glycosylation. Residues Asn-300 and Asn-311 are each glycosylated (N-linked (GlcNAc...) asparagine). N-linked (GlcNAc...) asparagine glycosylation is found at Asn-378, Asn-396, and Asn-416. Asn-464 carries an N-linked (GlcNAc...) asparagine glycan. An N-linked (GlcNAc...) asparagine glycan is attached at Asn-519. Residue Asn-563 is glycosylated (N-linked (GlcNAc...) asparagine). 2 N-linked (GlcNAc...) asparagine glycosylation sites follow: Asn-698 and Asn-714. Asn-746 and Asn-767 each carry an N-linked (GlcNAc...) asparagine glycan. The interval 760-812 (KQFDSFGNTSYQGNDGLRGFPLSKLCGGEDQVTTPAELDQEEEEEDSPMISWQ) is C-cap/acidic domain. Residues 813–833 (GVLVGYGCGLVIGLSVIYIMW) form a helical membrane-spanning segment. At 834–863 (STQYPAWFSRMDLKLEHIITTKMKKHKKRY) the chain is on the cytoplasmic side.

Belongs to the RLP family. In terms of assembly, interacts with thioredoxin-like protein CITRX.

It is found in the cell membrane. Its function is as follows. Involved in plant defense. Confers resistance to the fungal pathogen C.fulvum through recognition of the AVR9 elicitor protein. This Solanum pimpinellifolium (Currant tomato) protein is Receptor-like protein Cf-9.